The following is a 229-amino-acid chain: Large ribosomal subunit protein uL1 (229 aa).

The protein belongs to the universal ribosomal protein uL1 family. In terms of assembly, part of the 50S ribosomal subunit.

Its function is as follows. Binds directly to 23S rRNA. The L1 stalk is quite mobile in the ribosome, and is involved in E site tRNA release. Functionally, protein L1 is also a translational repressor protein, it controls the translation of the L11 operon by binding to its mRNA. The protein is Large ribosomal subunit protein uL1 of Pasteurella multocida (strain Pm70).